The primary structure comprises 416 residues: Tryptophan synthase beta chain (416 aa).

The residue at position 109 (Lys109) is an N6-(pyridoxal phosphate)lysine.

The protein belongs to the TrpB family. Tetramer of two alpha and two beta chains. Requires pyridoxal 5'-phosphate as cofactor.

It carries out the reaction (1S,2R)-1-C-(indol-3-yl)glycerol 3-phosphate + L-serine = D-glyceraldehyde 3-phosphate + L-tryptophan + H2O. It participates in amino-acid biosynthesis; L-tryptophan biosynthesis; L-tryptophan from chorismate: step 5/5. The beta subunit is responsible for the synthesis of L-tryptophan from indole and L-serine. This Mesorhizobium japonicum (strain LMG 29417 / CECT 9101 / MAFF 303099) (Mesorhizobium loti (strain MAFF 303099)) protein is Tryptophan synthase beta chain.